We begin with the raw amino-acid sequence, 344 residues long: Chalcone synthase A (344 aa).

Cys-167 is a catalytic residue.

The protein belongs to the thiolase-like superfamily. Chalcone/stilbene synthases family.

It catalyses the reaction (E)-4-coumaroyl-CoA + 3 malonyl-CoA + 3 H(+) = 2',4,4',6'-tetrahydroxychalcone + 3 CO2 + 4 CoA. It participates in secondary metabolite biosynthesis; flavonoid biosynthesis. In terms of biological role, the primary product of this enzyme is 4,2',4',6'-tetrahydroxychalcone (also termed naringenin-chalcone or chalcone) which can under specific conditions spontaneously isomerize into naringenin. The sequence is that of Chalcone synthase A (CHSA) from Ipomoea nil (Japanese morning glory).